The chain runs to 428 residues: Cyclic AMP-responsive element-binding protein 3-like protein 3-B (428 aa).

Residues 1–286 (MDHYSDQGGD…VMNGSNKPVQ (286 aa)) are Cytoplasmic-facing. Positions 67 to 83 (VSGSPVWSPSPSDSGIS) are enriched in low complexity. Positions 67–104 (VSGSPVWSPSPSDSGISEDPHSDHIDSPPPNASPPMEP) are disordered. Residues 93–103 (SPPPNASPPME) show a composition bias toward pro residues. A bZIP domain is found at 210-273 (ILKKIRRKIR…ISLMEQLRRL (64 aa)). Residues 212 to 241 (KKIRRKIRNKQSAQESRKKKKEYIDGLESR) are basic motif. The leucine-zipper stretch occupies residues 252-273 (LQRKVFQLEKCNISLMEQLRRL). Residues 287–303 (AGTCVLVLLLSFTLILL) form a helical; Signal-anchor for type II membrane protein membrane-spanning segment. Over 304-428 (PNLKPFTDTK…SRRSPHADDM (125 aa)) the chain is Lumenal. The interval 381 to 428 (TEYDPESHNHSFDQHDEHHHGDPITGHVATVTLNPRRGSRRSPHADDM) is disordered. The span at 385-402 (PESHNHSFDQHDEHHHGD) shows a compositional bias: basic and acidic residues. A glycan (N-linked (GlcNAc...) asparagine) is linked at asparagine 389.

The protein belongs to the bZIP family. ATF subfamily. Binds DNA as a dimer. Post-translationally, controlled by regulated intramembrane proteolysis (RIP). A fragment containing the cytoplasmic transcription factor domain is released by proteolysis. The cleavage seems to be performed sequentially by site-1 and site-2 proteases.

The protein localises to the endoplasmic reticulum membrane. It localises to the nucleus. Functionally, transcriptional activator. Binds the cAMP response element (CRE). Activates transcription through box-B element and CRE. Seems to function synergistically with atf6. Regulates FGF21 transcription. This chain is Cyclic AMP-responsive element-binding protein 3-like protein 3-B (creb3l3b), found in Danio rerio (Zebrafish).